A 502-amino-acid chain; its full sequence is NAD(P)H-quinone oxidoreductase chain 4, chloroplastic (502 aa).

Transmembrane regions (helical) follow at residues 4–24, 37–57, 87–107, 113–130, 134–154, 167–187, 213–233, 244–264, 274–294, 315–335, 336–356, 388–408, 419–439, and 464–484; these read FPWLTILVVLPIFAGSLIFFL, ISICLLEFLLMTYAFCYHFQL, LGSILLTGFITTLATLAAWPV, LFYFLMLAMYSGQIGLFS, LLLFFIMWELELIPVYLLLSM, FILYTAGGSIFFLIGVLGMGL, ILLYFGFLIAYAVKLPIIPLH, HYSTCMLLAGILLKMGAYGLI, AHYLFSPWLVIIGAIQIIYAA, MGFIIIGIGSITNIGLNGAIL, QILSHGFIGATLFFLAGTASD, LALPGMSGFVAELVVFFGLIT, LITFVMAIGMILTPIYLLSML, and LFILICIFLPVIGIGIYPDFV.

Belongs to the complex I subunit 4 family.

It is found in the plastid. The protein localises to the chloroplast thylakoid membrane. It carries out the reaction a plastoquinone + NADH + (n+1) H(+)(in) = a plastoquinol + NAD(+) + n H(+)(out). It catalyses the reaction a plastoquinone + NADPH + (n+1) H(+)(in) = a plastoquinol + NADP(+) + n H(+)(out). In Lolium perenne (Perennial ryegrass), this protein is NAD(P)H-quinone oxidoreductase chain 4, chloroplastic.